An 84-amino-acid chain; its full sequence is MSSGGLLLLLGLLTLWAELTPISSHDRPKFCNLAPESGRCRGHLRRIYYNLESNKCKVFFYGGCGGNANNFETRDECRQTCGGK.

The first 24 residues, Met-1 to Ser-24, serve as a signal peptide directing secretion. The BPTI/Kunitz inhibitor domain maps to Cys-31–Cys-81. 3 disulfide bridges follow: Cys-31–Cys-81, Cys-40–Cys-64, and Cys-56–Cys-77.

The protein belongs to the venom Kunitz-type family. In terms of tissue distribution, expressed by the venom gland.

The protein resides in the secreted. In terms of biological role, serine protease inhibitor that inhibits trypsin. In Daboia siamensis (Eastern Russel's viper), this protein is Kunitz-type serine protease inhibitor B6.